The sequence spans 100 residues: Small ribosomal subunit protein uS14c (100 aa).

Belongs to the universal ribosomal protein uS14 family. In terms of assembly, part of the 30S ribosomal subunit.

It is found in the plastid. The protein resides in the chloroplast. In terms of biological role, binds 16S rRNA, required for the assembly of 30S particles. In Liriodendron tulipifera (Tuliptree), this protein is Small ribosomal subunit protein uS14c.